The chain runs to 276 residues: MACERLGGQSGAADVDAAAPAMAAVNLTLGFAGKTVLDQVSMGFPARAVTSLMGPTGSGKTTFLRTLNRMNDKVSGYRYSGDVLLGGRSIFNYRDVLEFRRRVGMLFQRPNPFPMSIMDNVLAGVRAHKLVPRKEFRGVAQARLTEVGLWDAVKDRLSDSPFRLSGGQQQLLCLARTLAVNPEVLLLDEPTSALDPTTTEKIEEFIRSLADRLTVIIVTHNLAQAARISDRAALFFDGRLVEEGPTEQLFSSPKHAETARYVAGLSGDVKDAKRGN.

The ABC transporter domain occupies 22-262 (MAAVNLTLGF…PKHAETARYV (241 aa)). Residue 54–61 (GPTGSGKT) participates in ATP binding.

The protein belongs to the ABC transporter superfamily. Phosphate importer (TC 3.A.1.7) family. As to quaternary structure, the complex is composed of two ATP-binding proteins (PstB), two transmembrane proteins (PstC and PstA) and a solute-binding protein (PstS).

The protein localises to the cell membrane. The catalysed reaction is phosphate(out) + ATP + H2O = ADP + 2 phosphate(in) + H(+). Functionally, part of the ABC transporter complex PstSACB involved in phosphate import. Responsible for energy coupling to the transport system. In Mycobacterium bovis (strain ATCC BAA-935 / AF2122/97), this protein is Phosphate import ATP-binding protein PstB 2.